Consider the following 268-residue polypeptide: MVTNKSYRERSDTSSSPVTRRLFHLMEQKQSNLCASVDVRTTKELLSLVDKLGPYICLVKTHIDIIDDFSYEETILPLLELSKKHKFMIFEDRKFADIGNTVKHQYTGGVYKIAKWADLTNAHGVTGEGVVKGLKEGAQETTDEARGLLMLAELSSKGSLAYGEYSKKTIDIAKTDKDFVMGFIAQNYMGGTDEGFDWVIMTPGVGLDDKGDNLGQQYRTVDEVISKGTDVIIVGRGLFGKGRDPVVEGKRYKEAGWNAYLKRVAAGR.

Residues aspartate 38, 60 to 62 (KTH), 92 to 101 (DRKFADIGNT), tyrosine 218, and arginine 236 each bind substrate. The active-site Proton donor is the lysine 94.

Belongs to the OMP decarboxylase family.

The catalysed reaction is orotidine 5'-phosphate + H(+) = UMP + CO2. It functions in the pathway pyrimidine metabolism; UMP biosynthesis via de novo pathway; UMP from orotate: step 2/2. This chain is Orotidine 5'-phosphate decarboxylase (URA3), found in Candida parapsilosis (Yeast).